Reading from the N-terminus, the 338-residue chain is tRNA-cytidine(32) 2-sulfurtransferase (338 aa).

A PP-loop motif motif is present at residues 86–91 (SGGKDS). Residues Cys-161, Cys-164, and Cys-252 each contribute to the [4Fe-4S] cluster site.

The protein belongs to the TtcA family. As to quaternary structure, homodimer. Mg(2+) is required as a cofactor. Requires [4Fe-4S] cluster as cofactor.

It localises to the cytoplasm. The catalysed reaction is cytidine(32) in tRNA + S-sulfanyl-L-cysteinyl-[cysteine desulfurase] + AH2 + ATP = 2-thiocytidine(32) in tRNA + L-cysteinyl-[cysteine desulfurase] + A + AMP + diphosphate + H(+). The protein operates within tRNA modification. In terms of biological role, catalyzes the ATP-dependent 2-thiolation of cytidine in position 32 of tRNA, to form 2-thiocytidine (s(2)C32). The sulfur atoms are provided by the cysteine/cysteine desulfurase (IscS) system. The polypeptide is tRNA-cytidine(32) 2-sulfurtransferase (Albidiferax ferrireducens (strain ATCC BAA-621 / DSM 15236 / T118) (Rhodoferax ferrireducens)).